Here is a 1499-residue protein sequence, read N- to C-terminus: MAFAIGTSPIKRDFTRIKISVASPESILARSRGEVLKPETINYRTYKPERDGLMCEKIFGPTKDWECYCGKYKRVRYKGIICDRCGVEVTSKSVRRERMGHISLAVPVVHTWFFRSVPSKIGALLDLSTKELERIIYYEVFVVINPGEPGRKQGLKMMDRLTEEQYYQIITEYEDNQDLDDDDPDKFVAKMGGEAIKALLKRLDLDSTAKELRRILKESQSEQKKADALKRLKVVEAFRASYEPYSKEAKKKEEFSLEPPEPYRYEGNKPEYMVMEVIPVIPPELRPLVPLEGGRFATSDLNDLYRRVIIRNNRLKKLLDIRAPEVILRNEKRMLQEAVDALFDNSRKANAVKSGDSNRALKSLSDSLKGKQGRFRQNLLGKRVDYSGRSVIVVGPELRLHQCGLPKDMAIELFQPFVIRRLVERGYAKSVKSAKKLIDRKDPAIWDVLEKVIEGHPIMLNRAPTLHRLGIQAFQPVLVEGKALQLHPLVCTAFNADFDGDQMAVHIPLSQEAQMEAMMLMLSSHNLILPQSGKPVTVPSQDMVLGVYYLTKVRKGARGEGNIFANTEDVVIAYNEGEVDLHARIFVRYDKPRDEKNDVLSFIDAIPESKPEKRKWVKEQLEAKTLMATTVGRVLFSQVMPETISFINKVLDKKTAKDLIAHVISKVGTVRAEKFLDDVKGLGFNMAMRGGLSIGLSDAIVPETKKRYIKEAIKNSNKIIKEYNTGMLTENEKYNKIVDVWQNVTNIVSDESYQTLRKDRDGFNPLFMMLDSGARGSRNQARQLTGMRGLIARPQKSMSGQPGEIIENPIISNLREGLTVLEYFISTHGARKGLSDTSLKTADAGYLTRRLHDVAQDVIVTEDDCGTTMGIHIRRDEEEVAGKVKFHDKLRGRYVAHDVVDSITEQVVLKAGDLITDEIAEELRLNVGVTDVMIRSVLTCDSKRGICAKCYGTNLASGRQVDAGEAVGVIAAQSIGEPGTQLTLRTFHQGGAAQGGIAETEIRSQYEGQLEFENIQMVQSKTFNEDGAEEVHDIVIRKNGVMNIVDPSTGKILKRMIVPYGAKMNCKDGDMVQKGSLLYGVEPNSTPILAEKDGVIKFVDIEKGVTYKEESDQQTGHVQRVIINWRSRVRTVDIREPRIQLLTHHGELIASYPIPIKANLHSEDGATVHAGDVLAKVPRDLTRIGGDITAGLPRVTELFEARNPSDPAVVSEIDGIVTFGSQRRNNKEVKVKNAYDDERIYLVPIGKHILVNEGDEVRAGDPITDGSISPQDILRIQGPNAVQQYLVNEIQKVYQINAGVEINDKHLEVIVRQMLQKVQVEDSGDTHLMPGDLIDKTTFKDVNSKIQGKVRVSEKGDARNIQEGELYAKEEIGRLNRELRKNNRVLVTFEPAVPATSRPVLLGITSAALQTESFISAASFQETTKVLTDAAVEGKTDFLAGLKENVIVGKLIPAGTGLKRYRSLRISTANLQDSYEPSQRAYQEDEYAKKEDGEIAIDD.

Residues Cys67, Cys69, Cys82, and Cys85 each coordinate Zn(2+). Residues Asp497, Asp499, and Asp501 each coordinate Mg(2+). Positions 865, 940, 947, and 950 each coordinate Zn(2+). Residues 1475 to 1499 (YEPSQRAYQEDEYAKKEDGEIAIDD) are disordered. Positions 1482–1493 (YQEDEYAKKEDG) are enriched in basic and acidic residues.

Belongs to the RNA polymerase beta' chain family. The RNAP catalytic core consists of 2 alpha, 1 beta, 1 beta' and 1 omega subunit. When a sigma factor is associated with the core the holoenzyme is formed, which can initiate transcription. It depends on Mg(2+) as a cofactor. Zn(2+) serves as cofactor.

It catalyses the reaction RNA(n) + a ribonucleoside 5'-triphosphate = RNA(n+1) + diphosphate. Functionally, DNA-dependent RNA polymerase catalyzes the transcription of DNA into RNA using the four ribonucleoside triphosphates as substrates. This chain is DNA-directed RNA polymerase subunit beta', found in Chloroherpeton thalassium (strain ATCC 35110 / GB-78).